We begin with the raw amino-acid sequence, 226 residues long: Large ribosomal subunit protein uL1 (226 aa).

This sequence belongs to the universal ribosomal protein uL1 family. In terms of assembly, part of the 50S ribosomal subunit.

Functionally, binds directly to 23S rRNA. The L1 stalk is quite mobile in the ribosome, and is involved in E site tRNA release. In terms of biological role, protein L1 is also a translational repressor protein, it controls the translation of the L11 operon by binding to its mRNA. In Treponema pallidum (strain Nichols), this protein is Large ribosomal subunit protein uL1.